The sequence spans 153 residues: Small ribosomal subunit protein bS16 (153 aa).

The protein belongs to the bacterial ribosomal protein bS16 family.

The sequence is that of Small ribosomal subunit protein bS16 from Leifsonia xyli subsp. xyli (strain CTCB07).